The following is a 401-amino-acid chain: Glutamyl-tRNA reductase (401 aa).

Substrate is bound by residues T45–R48, S101, E106–Q108, and Q112. The Nucleophile role is filled by C46. G177–G182 is a binding site for NADP(+).

It belongs to the glutamyl-tRNA reductase family. As to quaternary structure, homodimer.

It carries out the reaction (S)-4-amino-5-oxopentanoate + tRNA(Glu) + NADP(+) = L-glutamyl-tRNA(Glu) + NADPH + H(+). It functions in the pathway porphyrin-containing compound metabolism; protoporphyrin-IX biosynthesis; 5-aminolevulinate from L-glutamyl-tRNA(Glu): step 1/2. In terms of biological role, catalyzes the NADPH-dependent reduction of glutamyl-tRNA(Glu) to glutamate 1-semialdehyde (GSA). The sequence is that of Glutamyl-tRNA reductase from Clostridium botulinum (strain Alaska E43 / Type E3).